Here is a 358-residue protein sequence, read N- to C-terminus: Core-capsid bridging protein (358 aa).

Residues 296–331 (PSITPTPGYRGTTFKPSRTRSTRRRRSVRRRSRRTA) are disordered. The span at 312-329 (SRTRSTRRRRSVRRRSRR) shows a compositional bias: basic residues.

Belongs to the adenoviridae core-capsid bridging protein family. In terms of assembly, monomer. Homodimer. Exists in equilibrium between monomers and dimers in solution. Interacts with the histone-like nucleoprotein; this interactions bridge the virus core to the capsid. Interacts with core protein X; this interactions bridge the virus core to the capsid. Interacts with the endosome lysis protein VI; this interactions bridge the virus core to the capsid. Interacts with the peripentonal hexons. Interacts with host NPM1; this interaction might play a role in virus assembly.

Its subcellular location is the virion. The protein localises to the host nucleus. It localises to the host nucleolus. Its function is as follows. Associates loosely with the viral DNA to form an outer shell around the nucleoprotein-DNA complex and links it with the capsid by binding the endosome lysis protein. Dissociates from the viral genome during entry. Might be involved in nuclear capsid assembly of the viral particles through its association with NPM1/nucleophosmin. In Human adenovirus F serotype 40 (HAdV-40), this protein is Core-capsid bridging protein.